A 189-amino-acid chain; its full sequence is DAN domain family member 5 (189 aa).

A signal peptide spans 1-22; that stretch reads MLLGQLSTLLCLLSGALPTGSG. N-linked (GlcNAc...) asparagine glycosylation occurs at Asn-38. Cystine bridges form between Cys-101-Cys-148, Cys-115-Cys-162, Cys-125-Cys-183, and Cys-129-Cys-185. In terms of domain architecture, CTCK spans 101 to 186; it reads CKAVPFVQVF…TMLIEGCHCS (86 aa).

Belongs to the DAN family. Expressed in the retina, in inner segments of photoreceptors, at or close to the outer plexiform layer and in the ganglion cell layer (at protein level).

The protein resides in the secreted. Functionally, antagonist of the extracellular signaling protein NODAL, which is required for correct left-right patterning during embryonic development. Antagonist of BMP and TGF-beta signaling. Independently of its role in left-right axis establishment, plays a role during heart development, possibly through the regulation of TGF-beta/Nodal signaling pathway. Displays anti-angiogenic activity by inhibiting endothelial sprouting, migration, and proliferation. Once internalized by endothelial cells, may alter their redox and glycolytic balance. The polypeptide is DAN domain family member 5 (DAND5) (Homo sapiens (Human)).